A 494-amino-acid polypeptide reads, in one-letter code: Cytochrome P450 2B11 (494 aa).

Ser128 carries the post-translational modification Phosphoserine; by PKA. Heme is bound at residue Cys436.

This sequence belongs to the cytochrome P450 family. Heme serves as cofactor.

The protein resides in the endoplasmic reticulum membrane. It is found in the microsome membrane. The catalysed reaction is an organic molecule + reduced [NADPH--hemoprotein reductase] + O2 = an alcohol + oxidized [NADPH--hemoprotein reductase] + H2O + H(+). Cytochromes P450 are a group of heme-thiolate monooxygenases. In liver microsomes, this enzyme is involved in an NADPH-dependent electron transport pathway. This isozyme seems responsible for metabolism of 2,2',4,4',5,5'-hexachlorobiphenyl. The sequence is that of Cytochrome P450 2B11 (CYP2B11) from Canis lupus familiaris (Dog).